A 160-amino-acid chain; its full sequence is MTVTDAPSANPTRRSRTIARVAAVQALFQCEQSGDTAETVISQFIRHRRISSTASFDDGHIPDADLKLFQEIVLGVTRRQDDIDAKLSDVLPEQWPLPRLDPVLRALLRAAVFEIGTDTPDRIIINEYLDVAHGFFSGDEPKMVNGILDTLSRRANDGNV.

Belongs to the NusB family.

Involved in transcription antitermination. Required for transcription of ribosomal RNA (rRNA) genes. Binds specifically to the boxA antiterminator sequence of the ribosomal RNA (rrn) operons. The protein is Transcription antitermination protein NusB of Gluconobacter oxydans (strain 621H) (Gluconobacter suboxydans).